The chain runs to 382 residues: Cell division protein FtsZ (382 aa).

GTP is bound by residues 21–25, 108–110, Glu139, Arg143, and Asp187; these read GGGSN and GTG. Residues 322 to 382 are disordered; sequence RAQQQSNFNR…FLRNRRRKSR (61 aa). Positions 340-352 are enriched in basic and acidic residues; that stretch reads KSKEKEAEKKEPR.

The protein belongs to the FtsZ family. In terms of assembly, homodimer. Polymerizes to form a dynamic ring structure in a strictly GTP-dependent manner. Interacts directly with several other division proteins.

Its subcellular location is the cytoplasm. Essential cell division protein that forms a contractile ring structure (Z ring) at the future cell division site. The regulation of the ring assembly controls the timing and the location of cell division. One of the functions of the FtsZ ring is to recruit other cell division proteins to the septum to produce a new cell wall between the dividing cells. Binds GTP and shows GTPase activity. The protein is Cell division protein FtsZ of Halalkalibacterium halodurans (strain ATCC BAA-125 / DSM 18197 / FERM 7344 / JCM 9153 / C-125) (Bacillus halodurans).